The sequence spans 458 residues: Cysteine--tRNA ligase (458 aa).

A Zn(2+)-binding site is contributed by cysteine 27. The short motif at 29 to 39 (MTVYDYMHIGH) is the 'HIGH' region element. Residues cysteine 208, histidine 233, and glutamate 237 each contribute to the Zn(2+) site. Positions 265 to 269 (KMSKS) match the 'KMSKS' region motif. Lysine 268 serves as a coordination point for ATP.

Belongs to the class-I aminoacyl-tRNA synthetase family. Monomer. It depends on Zn(2+) as a cofactor.

The protein localises to the cytoplasm. It carries out the reaction tRNA(Cys) + L-cysteine + ATP = L-cysteinyl-tRNA(Cys) + AMP + diphosphate. The protein is Cysteine--tRNA ligase of Coxiella burnetii (strain Dugway 5J108-111).